Consider the following 134-residue polypeptide: Thioredoxin H2-2 (134 aa).

Residues 1-20 (MGSFFSTMFTPPPAADDGGD) form a disordered region. Positions 3-130 (SFFSTMFTPP…LERKVNMFIS (128 aa)) constitute a Thioredoxin domain. Catalysis depends on nucleophile residues C56 and C59. An intrachain disulfide couples C56 to C59.

Belongs to the thioredoxin family. Plant H-type subfamily.

The protein resides in the cytoplasm. Functionally, probable thiol-disulfide oxidoreductase that may be involved in the redox regulation of a number of cytosolic enzymes. The protein is Thioredoxin H2-2 of Oryza sativa subsp. japonica (Rice).